A 329-amino-acid polypeptide reads, in one-letter code: Sex comb on midleg-like protein 1 (329 aa).

S138 and S238 each carry phosphoserine. An SAM domain is found at 258–325 (WSVEAVVLFL…YYIDRLKQGK (68 aa)).

The protein belongs to the SCM family.

The protein resides in the nucleus. Its function is as follows. Putative Polycomb group (PcG) protein. PcG proteins act by forming multiprotein complexes, which are required to maintain the transcriptionally repressive state of homeotic genes throughout development. May be involved in spermatogenesis during sexual maturation. This chain is Sex comb on midleg-like protein 1 (SCML1), found in Hoolock hoolock (Western hoolock gibbon).